A 408-amino-acid chain; its full sequence is Aminopeptidase T (408 aa).

The a divalent metal cation site is built by glutamate 250, glutamate 316, glutamate 340, histidine 345, histidine 376, and aspartate 378.

The protein belongs to the peptidase M29 family. As to quaternary structure, homodimer. The cofactor is Co(2+). Requires Zn(2+) as cofactor. Mg(2+) serves as cofactor.

Functionally, metal-dependent exopeptidase. This Thermus aquaticus protein is Aminopeptidase T.